The primary structure comprises 290 residues: AA9 family lytic polysaccharide monooxygenase A (290 aa).

The signal sequence occupies residues 1–17 (MKLSLLASVALVPFVSA). 2 residues coordinate Cu(2+): histidine 18 and histidine 101. An intrachain disulfide couples cysteine 67 to cysteine 189. O2 is bound at residue histidine 176. Tyrosine 187 contacts Cu(2+). N-linked (GlcNAc...) asparagine glycosylation is found at asparagine 220 and asparagine 254. The disordered stretch occupies residues 240–290 (GGSGSGSSSYSKVANVTSSDESSQSGASSSQGTVSTCPNKYNRRHARQFKP). The segment covering 245–275 (GSSSYSKVANVTSSDESSQSGASSSQGTVST) has biased composition (low complexity). Positions 280-290 (YNRRHARQFKP) are enriched in basic residues.

It belongs to the polysaccharide monooxygenase AA9 family. The cofactor is Cu(2+).

It localises to the secreted. The enzyme catalyses [(1-&gt;4)-beta-D-glucosyl]n+m + reduced acceptor + O2 = 4-dehydro-beta-D-glucosyl-[(1-&gt;4)-beta-D-glucosyl]n-1 + [(1-&gt;4)-beta-D-glucosyl]m + acceptor + H2O.. In terms of biological role, lytic polysaccharide monooxygenase (LPMO) that depolymerizes crystalline and amorphous polysaccharides via the oxidation of scissile alpha- or beta-(1-4)-glycosidic bonds, yielding exclusively C1 oxidation products. Catalysis by LPMOs requires the reduction of the active-site copper from Cu(II) to Cu(I) by a reducing agent and H(2)O(2) or O(2) as a cosubstrate. This is AA9 family lytic polysaccharide monooxygenase A from Aspergillus fumigatus (strain ATCC MYA-4609 / CBS 101355 / FGSC A1100 / Af293) (Neosartorya fumigata).